The chain runs to 124 residues: Insulin growth factor-like family member 4 (124 aa).

A signal peptide spans 1–19; that stretch reads MVPRISAAIFIFELLGSNS. Residues N57 and N84 are each glycosylated (N-linked (GlcNAc...) asparagine).

It belongs to the IGFL family. In terms of tissue distribution, detected in the cerebellum.

It localises to the secreted. This is Insulin growth factor-like family member 4 (IGFL4) from Homo sapiens (Human).